The chain runs to 254 residues: Imidazole glycerol phosphate synthase subunit HisF (254 aa).

Catalysis depends on residues Asp-13 and Asp-132.

This sequence belongs to the HisA/HisF family. In terms of assembly, heterodimer of HisH and HisF.

Its subcellular location is the cytoplasm. The catalysed reaction is 5-[(5-phospho-1-deoxy-D-ribulos-1-ylimino)methylamino]-1-(5-phospho-beta-D-ribosyl)imidazole-4-carboxamide + L-glutamine = D-erythro-1-(imidazol-4-yl)glycerol 3-phosphate + 5-amino-1-(5-phospho-beta-D-ribosyl)imidazole-4-carboxamide + L-glutamate + H(+). The protein operates within amino-acid biosynthesis; L-histidine biosynthesis; L-histidine from 5-phospho-alpha-D-ribose 1-diphosphate: step 5/9. Its function is as follows. IGPS catalyzes the conversion of PRFAR and glutamine to IGP, AICAR and glutamate. The HisF subunit catalyzes the cyclization activity that produces IGP and AICAR from PRFAR using the ammonia provided by the HisH subunit. This Sulfurovum sp. (strain NBC37-1) protein is Imidazole glycerol phosphate synthase subunit HisF.